A 128-amino-acid chain; its full sequence is ATP synthase epsilon chain (128 aa).

The interval 98–128 is disordered; the sequence is EALDMPSSTPEQAQIKDAAVRRARGQLRASR. Positions 118–128 are enriched in basic residues; it reads RRARGQLRASR.

The protein belongs to the ATPase epsilon chain family. As to quaternary structure, F-type ATPases have 2 components, CF(1) - the catalytic core - and CF(0) - the membrane proton channel. CF(1) has five subunits: alpha(3), beta(3), gamma(1), delta(1), epsilon(1). CF(0) has three main subunits: a, b and c.

The protein resides in the cell inner membrane. Functionally, produces ATP from ADP in the presence of a proton gradient across the membrane. This chain is ATP synthase epsilon chain, found in Rhodopirellula baltica (strain DSM 10527 / NCIMB 13988 / SH1).